Reading from the N-terminus, the 408-residue chain is Endo-1,4-beta-xylanase A (408 aa).

Positions 1-19 are cleaved as a signal peptide; that stretch reads MKLSASFAALALLLPFVQA. Residues 20-55 form the CBM1 domain; it reads QSPVWGQCGGIGWTGPTTCTAGNVCQEYSAYYSQCI. A disordered region spans residues 64–89; sequence TSVSTAPNPPPTSHTSTSSAPSGAST. The span at 76 to 89 shows a compositional bias: low complexity; that stretch reads SHTSTSSAPSGAST. Positions 88–405 constitute a GH10 domain; the sequence is STSTAKLNTL…KPAYDGIAIG (318 aa). Glutamate 222 functions as the Proton donor in the catalytic mechanism. The active-site Nucleophile is glutamate 327. Residues cysteine 355 and cysteine 361 are joined by a disulfide bond.

Belongs to the glycosyl hydrolase 10 (cellulase F) family.

It is found in the secreted. It carries out the reaction Endohydrolysis of (1-&gt;4)-beta-D-xylosidic linkages in xylans.. The protein operates within glycan degradation; xylan degradation. Its function is as follows. Endo-1,4-beta-xylanase involved in the hydrolysis of xylan, a major structural heterogeneous polysaccharide found in plant biomass representing the second most abundant polysaccharide in the biosphere, after cellulose. The chain is Endo-1,4-beta-xylanase A (xynA) from Phanerodontia chrysosporium (White-rot fungus).